We begin with the raw amino-acid sequence, 186 residues long: Ribosome-recycling factor (186 aa).

The segment at 144 to 163 is disordered; that stretch reads EKDGVIGQDESRAQSERVQK.

The protein belongs to the RRF family.

The protein localises to the cytoplasm. Responsible for the release of ribosomes from messenger RNA at the termination of protein biosynthesis. May increase the efficiency of translation by recycling ribosomes from one round of translation to another. The chain is Ribosome-recycling factor from Rhizobium etli (strain CIAT 652).